A 178-amino-acid chain; its full sequence is Large ribosomal subunit protein bL25 (178 aa).

Belongs to the bacterial ribosomal protein bL25 family. CTC subfamily. Part of the 50S ribosomal subunit; part of the 5S rRNA/L5/L18/L25 subcomplex. Contacts the 5S rRNA. Binds to the 5S rRNA independently of L5 and L18.

In terms of biological role, this is one of the proteins that binds to the 5S RNA in the ribosome where it forms part of the central protuberance. In Helicobacter acinonychis (strain Sheeba), this protein is Large ribosomal subunit protein bL25.